The following is a 115-amino-acid chain: uncharacterized protein (115 aa).

This is an uncharacterized protein from Ostreid herpesvirus 1 (isolate France) (OsHV-1).